A 214-amino-acid polypeptide reads, in one-letter code: Holliday junction branch migration complex subunit RuvA (214 aa).

A domain I region spans residues 1-63; that stretch reads MISSLRGTVL…EDSLTLFGFP (63 aa). The interval 64-139 is domain II; the sequence is GPDELRAFEL…KLFVTQPRAR (76 aa). A flexible linker region spans residues 139-143; sequence RSATS. A domain III region spans residues 144–214; sequence AASTVTADVV…AAPTGQAADR (71 aa).

This sequence belongs to the RuvA family. Homotetramer. Forms an RuvA(8)-RuvB(12)-Holliday junction (HJ) complex. HJ DNA is sandwiched between 2 RuvA tetramers; dsDNA enters through RuvA and exits via RuvB. An RuvB hexamer assembles on each DNA strand where it exits the tetramer. Each RuvB hexamer is contacted by two RuvA subunits (via domain III) on 2 adjacent RuvB subunits; this complex drives branch migration. In the full resolvosome a probable DNA-RuvA(4)-RuvB(12)-RuvC(2) complex forms which resolves the HJ.

It is found in the cytoplasm. The RuvA-RuvB-RuvC complex processes Holliday junction (HJ) DNA during genetic recombination and DNA repair, while the RuvA-RuvB complex plays an important role in the rescue of blocked DNA replication forks via replication fork reversal (RFR). RuvA specifically binds to HJ cruciform DNA, conferring on it an open structure. The RuvB hexamer acts as an ATP-dependent pump, pulling dsDNA into and through the RuvAB complex. HJ branch migration allows RuvC to scan DNA until it finds its consensus sequence, where it cleaves and resolves the cruciform DNA. This is Holliday junction branch migration complex subunit RuvA from Clavibacter michiganensis subsp. michiganensis (strain NCPPB 382).